Here is a 213-residue protein sequence, read N- to C-terminus: MTSLRYWDISPALDPNTPTWPGDTPFQQEWAARLDEQCPVNVGRITLSPHTGAHVDGPLHYRADGLPIGQVPLDIYMGPCRVIHCIGANPLVTPEHLAGQLDDLPSRVLLRTFERVPANWPEGFCAIAPATIECLAERGVRLVGIDTPSLDPQHSKTLDAHHAVGRHGMAILEGVVLDDVPAGDYELLALPLKFTHLDASPVRAVLRALPTAE.

Residue tryptophan 20 participates in substrate binding. Zn(2+)-binding residues include histidine 50, histidine 54, and aspartate 56. Residue histidine 60 is the Proton donor/acceptor of the active site. The Zn(2+) site is built by histidine 161 and glutamate 173.

Belongs to the Cyclase 1 superfamily. KynB family. Homodimer. The cofactor is Zn(2+).

The enzyme catalyses N-formyl-L-kynurenine + H2O = L-kynurenine + formate + H(+). The protein operates within amino-acid degradation; L-tryptophan degradation via kynurenine pathway; L-kynurenine from L-tryptophan: step 2/2. Functionally, catalyzes the hydrolysis of N-formyl-L-kynurenine to L-kynurenine, the second step in the kynurenine pathway of tryptophan degradation. The chain is Kynurenine formamidase from Pseudomonas aeruginosa (strain ATCC 15692 / DSM 22644 / CIP 104116 / JCM 14847 / LMG 12228 / 1C / PRS 101 / PAO1).